Reading from the N-terminus, the 201-residue chain is Small ribosomal subunit protein uS4 (201 aa).

Residues 20–46 (SGTGKELSRRPYAPGQHGQDRRGSLSE) form a disordered region. The region spanning 93–156 (RRLDNVVYRL…KDLQIVKEAL (64 aa)) is the S4 RNA-binding domain.

It belongs to the universal ribosomal protein uS4 family. Part of the 30S ribosomal subunit. Contacts protein S5. The interaction surface between S4 and S5 is involved in control of translational fidelity.

Its function is as follows. One of the primary rRNA binding proteins, it binds directly to 16S rRNA where it nucleates assembly of the body of the 30S subunit. In terms of biological role, with S5 and S12 plays an important role in translational accuracy. The polypeptide is Small ribosomal subunit protein uS4 (Ligilactobacillus salivarius (strain UCC118) (Lactobacillus salivarius)).